The following is a 637-amino-acid chain: 3D-(3,5/4)-trihydroxycyclohexane-1,2-dione hydrolase (637 aa).

E66 serves as a coordination point for thiamine diphosphate. Positions 442 to 522 (SLPGDLQRLW…INVLLFDNSG (81 aa)) are thiamine pyrophosphate binding. Mg(2+) is bound by residues D493 and N520.

Belongs to the TPP enzyme family. Mg(2+) serves as cofactor. Requires thiamine diphosphate as cofactor.

It carries out the reaction 3D-3,5/4-trihydroxycyclohexane-1,2-dione + H2O = 5-deoxy-D-glucuronate + H(+). It participates in polyol metabolism; myo-inositol degradation into acetyl-CoA; acetyl-CoA from myo-inositol: step 3/7. Functionally, involved in the cleavage of the C1-C2 bond of 3D-(3,5/4)-trihydroxycyclohexane-1,2-dione (THcHDO) to yield 5-deoxy-glucuronate (5DG). The chain is 3D-(3,5/4)-trihydroxycyclohexane-1,2-dione hydrolase from Bacillus velezensis (strain DSM 23117 / BGSC 10A6 / LMG 26770 / FZB42) (Bacillus amyloliquefaciens subsp. plantarum).